We begin with the raw amino-acid sequence, 313 residues long: Small ribosomal subunit protein uS2 (313 aa).

The segment covering 233–256 (RTMTDKQSDVAKEAKADGKEEAPK) has biased composition (basic and acidic residues). Residues 233–293 (RTMTDKQSDV…SRKLVAAGTA (61 aa)) form a disordered region.

The protein belongs to the universal ribosomal protein uS2 family.

The polypeptide is Small ribosomal subunit protein uS2 (Bdellovibrio bacteriovorus (strain ATCC 15356 / DSM 50701 / NCIMB 9529 / HD100)).